The chain runs to 494 residues: MNPVSYSELLRLTLPQIALTVAAFFVLACDGMLLRRSPIAVRARIAMLLSVAGSLVALALLPLTAPVQLLDGMLVLDARTGVVQVVLLLFTLAVTLLSGSVLAQQGREVSAFTTHIGEFFALLLFATVAALFLVSTQNLLLIFLAVEFLSLVLYILTAFNKHSRASAEAALKYFLFGGMSAGFLLFGISLLYGVSGSLDLQQIALAASQPDSLLLVAIVLVILGFGFKIAAAPFHLWAPDAYQGAPSLSAGFIASSSKVASFFVFAQVLFIGVASASGNAAWHLSAPGWMPILAAVAVLSMLLGNLAALAQTSLRRLLAYSAIGHAGYLLLGLIAHTPQSLAALLYYVFTYALAVLGAFGVLAILETNGIDSLSSLAGLSRRSPALSACLLVFLLSLAGIPPLVGFFAKFWLFAAALQAAPAFGLLWLVILAILMSVVALFYYLRVLRQVYVVPMAEDATPLSSPTLARITLLVMAALTLLLGCAPNLLMRWLR.

A run of 14 helical transmembrane segments spans residues 14–34, 45–65, 82–102, 116–136, 139–159, 174–194, 214–234, 262–282, 289–309, 317–337, 344–364, 388–408, 422–442, and 470–490; these read LPQIALTVAAFFVLACDGMLL, IAMLLSVAGSLVALALLPLTA, VVQVVLLLFTLAVTLLSGSVL, IGEFFALLLFATVAALFLVST, LLLIFLAVEFLSLVLYILTAF, FLFGGMSAGFLLFGISLLYGV, LLVAIVLVILGFGFKIAAAPF, FFVFAQVLFIGVASASGNAAW, WMPILAAVAVLSMLLGNLAAL, LLAYSAIGHAGYLLLGLIAHT, LLYYVFTYALAVLGAFGVLAI, ACLLVFLLSLAGIPPLVGFFA, AFGLLWLVILAILMSVVALFY, and ITLLVMAALTLLLGCAPNLLM.

It belongs to the complex I subunit 2 family. NDH-1 is composed of 14 different subunits. Subunits NuoA, H, J, K, L, M, N constitute the membrane sector of the complex.

Its subcellular location is the cell inner membrane. The enzyme catalyses a quinone + NADH + 5 H(+)(in) = a quinol + NAD(+) + 4 H(+)(out). Its function is as follows. NDH-1 shuttles electrons from NADH, via FMN and iron-sulfur (Fe-S) centers, to quinones in the respiratory chain. The immediate electron acceptor for the enzyme in this species is believed to be ubiquinone. Couples the redox reaction to proton translocation (for every two electrons transferred, four hydrogen ions are translocated across the cytoplasmic membrane), and thus conserves the redox energy in a proton gradient. In Acidobacterium capsulatum (strain ATCC 51196 / DSM 11244 / BCRC 80197 / JCM 7670 / NBRC 15755 / NCIMB 13165 / 161), this protein is NADH-quinone oxidoreductase subunit N 2.